The following is a 556-amino-acid chain: Beta-caryophyllene synthase TPS9FN (556 aa).

5 residues coordinate (2E,6E)-farnesyl diphosphate: R273, D310, D314, R451, and D454. Mg(2+) is bound by residues D310 and D314. Positions 310-314 (DDIYD) match the DDXXD motif motif. Mg(2+)-binding residues include D454, S458, and E462.

This sequence belongs to the terpene synthase family. Tpsb subfamily. Mg(2+) serves as cofactor. Mn(2+) is required as a cofactor. Expressed in glandular trichomes two to four weeks after flowering onset.

The catalysed reaction is (2E,6E)-farnesyl diphosphate = (-)-(E)-beta-caryophyllene + diphosphate. It catalyses the reaction (2E,6E)-farnesyl diphosphate = alpha-humulene + diphosphate. The protein operates within secondary metabolite biosynthesis; terpenoid biosynthesis. Functionally, involved in sesquiterpene olefins biosynthesis, constituants of cannabinoids and terpenoids-rich resins. Catalyzes mainly the conversion of (2E)-farnesyl diphosphate to beta-caryophyllene and alpha-humulene. Can also use (2E)-geranyl diphosphate as substrate with low efficiency. The chain is Beta-caryophyllene synthase TPS9FN from Cannabis sativa (Hemp).